The sequence spans 524 residues: Metalloendopeptidase OMA1, mitochondrial (524 aa).

Residues 1-13 constitute a mitochondrion transit peptide; it reads MSFICGLQSAARN. The propeptide occupies 14-143; sequence HVFFRFNSLS…RNFHTSPRFQ (130 aa). The Mitochondrial matrix portion of the chain corresponds to 144-195; the sequence is AAPVPLLLMILKPVQKLFAIIVGRGIRKWWQALPPNKKEVVKENIRKNKWKL. Positions 148 to 167 are cardiolipin-binding; that stretch reads PLLLMILKPVQKLFAIIVGR. Positions 165–195 are stress-sensor region; the sequence is VGRGIRKWWQALPPNKKEVVKENIRKNKWKL. Residues 196–216 traverse the membrane as a helical segment; sequence FLGLSSFGLLFVVFYFTHLEV. Zn(2+) is bound at residue His-327. Glu-328 is a catalytic residue. 2 residues coordinate Zn(2+): His-331 and Glu-392. The cysteines at positions 407 and 465 are disulfide-linked.

It belongs to the peptidase M48 family. As to quaternary structure, homooligomer. The cofactor is Zn(2+). In terms of processing, may form a redox-dependent disulfide bond. Exists in a semi-oxidized state and is activated by prolonged hypoxia. Post-translationally, autocatalytically cleaved in response to mitochondrial depolarization both at the N-terminus and C-terminus to generate the short active form (S-OMA1). Autocatalytic processing at the C-terminus takes place at residues 447-456. The S-OMA1 form is unstable. OMA1 pre-processing by AFG3L2 may participate in maturation before OMA1 autocatalytic cleavage. Degraded by YMEL1 in response to membrane depolarization. Protein turnover is regulated by prohibitin (PHB and PHB2), which promotes degradation of OMA1 in a cardiolipin-binding manner. Widely expressed, with strong expression in the heart, skeletal muscle, kidney and liver.

It is found in the mitochondrion inner membrane. Protease activity is activated upon autocatalytic cleavage in response to mitochondrial depolarization. Metalloprotease that is part of the quality control system in the inner membrane of mitochondria. Activated in response to various mitochondrial stress, leading to the proteolytic cleavage of target proteins, such as OPA1, UQCC3 and DELE1. Involved in the fusion of the mitochondrial inner membranes by mediating cleavage of OPA1 at S1 position, generating the soluble OPA1 (S-OPA1), which cooperates with the membrane form (L-OPA1) to coordinate the fusion of mitochondrial inner membranes. Following stress conditions that induce loss of mitochondrial membrane potential, mediates cleavage of OPA1, leading to excess production of soluble OPA1 (S-OPA1) and negative regulation of mitochondrial fusion. Involved in mitochondrial safeguard in response to transient mitochondrial membrane depolarization (flickering) by catalyzing cleavage of OPA1, leading to excess production of S-OPA1, preventing mitochondrial hyperfusion. Also acts as a regulator of apoptosis: upon BAK and BAX aggregation, mediates cleavage of OPA1, leading to the remodeling of mitochondrial cristae and allowing the release of cytochrome c from mitochondrial cristae. In depolarized mitochondria, may also act as a backup protease for PINK1 by mediating PINK1 cleavage and promoting its subsequent degradation by the proteasome. May also cleave UQCC3 in response to mitochondrial depolarization. Also acts as an activator of the integrated stress response (ISR): in response to mitochondrial stress, mediates cleavage of DELE1 to generate the processed form of DELE1 (S-DELE1), which translocates to the cytosol and activates EIF2AK1/HRI to trigger the ISR. Its role in mitochondrial quality control is essential for regulating lipid metabolism as well as to maintain body temperature and energy expenditure under cold-stress conditions. Binds cardiolipin, possibly regulating its protein turnover. Required for the stability of the respiratory supercomplexes. This chain is Metalloendopeptidase OMA1, mitochondrial, found in Homo sapiens (Human).